Consider the following 717-residue polypeptide: Fatty acid oxidation complex subunit alpha (717 aa).

The enoyl-CoA hydratase/isomerase stretch occupies residues 1 to 189; the sequence is MIYQSPTIEV…NVGAIDALVA (189 aa). D296 provides a ligand contact to substrate. The 3-hydroxyacyl-CoA dehydrogenase stretch occupies residues 311–717; the sequence is KKVNSAAVLG…ANNGSYYQQA (407 aa). NAD(+) is bound by residues M324, D343, 400 to 402, K407, and S429; that span reads VVE. H450 functions as the For 3-hydroxyacyl-CoA dehydrogenase activity in the catalytic mechanism. N453 serves as a coordination point for NAD(+). Substrate is bound by residues N500 and Y660.

This sequence in the N-terminal section; belongs to the enoyl-CoA hydratase/isomerase family. The protein in the C-terminal section; belongs to the 3-hydroxyacyl-CoA dehydrogenase family. In terms of assembly, heterotetramer of two alpha chains (FadB) and two beta chains (FadA).

The catalysed reaction is a (3S)-3-hydroxyacyl-CoA + NAD(+) = a 3-oxoacyl-CoA + NADH + H(+). The enzyme catalyses a (3S)-3-hydroxyacyl-CoA = a (2E)-enoyl-CoA + H2O. It carries out the reaction a 4-saturated-(3S)-3-hydroxyacyl-CoA = a (3E)-enoyl-CoA + H2O. It catalyses the reaction (3S)-3-hydroxybutanoyl-CoA = (3R)-3-hydroxybutanoyl-CoA. The catalysed reaction is a (3Z)-enoyl-CoA = a 4-saturated (2E)-enoyl-CoA. The enzyme catalyses a (3E)-enoyl-CoA = a 4-saturated (2E)-enoyl-CoA. Its pathway is lipid metabolism; fatty acid beta-oxidation. Involved in the aerobic and anaerobic degradation of long-chain fatty acids via beta-oxidation cycle. Catalyzes the formation of 3-oxoacyl-CoA from enoyl-CoA via L-3-hydroxyacyl-CoA. It can also use D-3-hydroxyacyl-CoA and cis-3-enoyl-CoA as substrate. The sequence is that of Fatty acid oxidation complex subunit alpha from Shewanella piezotolerans (strain WP3 / JCM 13877).